We begin with the raw amino-acid sequence, 198 residues long: MVNYPHKLSSQKRQPSLSQPKNFANRGMSFEKMINATNDYYLSQGLAVIHKKPTPIQIVRVDYPQRSRAKIVEAYFRQASTTDYSGVYNGYYIDFEAKETKQKRAIPMKNFHPHQIQHMEQVLAQQGICFVLLHFSSQQETYLLPAFDLIRFYHQDKGQKSMPLGYIREYGYEIKAGAFPQIPYLNVIKEHLLGGKTR.

Positions 1-21 (MVNYPHKLSSQKRQPSLSQPK) are disordered. The segment covering 11 to 21 (QKRQPSLSQPK) has biased composition (polar residues). The Mg(2+) site is built by Thr81, Asp83, Glu96, and Gln115.

The protein belongs to the RecU family. Mg(2+) serves as cofactor.

The protein resides in the cytoplasm. It carries out the reaction Endonucleolytic cleavage at a junction such as a reciprocal single-stranded crossover between two homologous DNA duplexes (Holliday junction).. Functionally, endonuclease that resolves Holliday junction intermediates in genetic recombination. Cleaves mobile four-strand junctions by introducing symmetrical nicks in paired strands. Promotes annealing of linear ssDNA with homologous dsDNA. Required for DNA repair, homologous recombination and chromosome segregation. This is Holliday junction resolvase RecU from Streptococcus pneumoniae (strain ATCC 700669 / Spain 23F-1).